The chain runs to 351 residues: MNNSWWLEPCKAIDTQMVEQALARQQQLTKPAGSLGRLEPLAVRLAGLQGRLKPGIERLWIAIFAGDHGVVAEGVSAYPQEVTGQMLLNFVSGGAAISVLARQLQAQLEVVDLGTVTPGLNLPGVRHLNLGAGTQNFVQGPAMTRAQGEQALQAGRDSALRAHADGAQLFIGGEMGIGNTTAASAIACALLGIPVAQLAGPGTGLNAEGVNHKAQVIERALALHDASRGDALQTLFNLGGFEVAALVGAYLACAQEGIAVLVDGFICSVAALVAVRLNPACAPWLLFAHQGAEPGHRHVLQTLQAEPLLDLGLRLGEGSGAALAVPLLRLACDLHGQMATFAEAAVADRPA.

The active-site Proton acceptor is the glutamate 317.

Belongs to the CobT family.

The catalysed reaction is 5,6-dimethylbenzimidazole + nicotinate beta-D-ribonucleotide = alpha-ribazole 5'-phosphate + nicotinate + H(+). It participates in nucleoside biosynthesis; alpha-ribazole biosynthesis; alpha-ribazole from 5,6-dimethylbenzimidazole: step 1/2. Catalyzes the synthesis of alpha-ribazole-5'-phosphate from nicotinate mononucleotide (NAMN) and 5,6-dimethylbenzimidazole (DMB). In Pseudomonas fluorescens (strain ATCC BAA-477 / NRRL B-23932 / Pf-5), this protein is Nicotinate-nucleotide--dimethylbenzimidazole phosphoribosyltransferase.